An 83-amino-acid chain; its full sequence is Turripeptide Lol11.1 (83 aa).

An N-terminal signal peptide occupies residues 1–27 (MARQMMTVGCLILIVVLLDMMVPVFNT).

This sequence belongs to the conopeptide I2-like superfamily. Post-translationally, contains 4 disulfide bonds. As to expression, expressed by the venom duct.

Its subcellular location is the secreted. Functionally, acts as a neurotoxin by inhibiting voltage-gated potassium channels (Kv). In Iotyrris olangoensis (Sea snail), this protein is Turripeptide Lol11.1.